The sequence spans 365 residues: Phosphoserine aminotransferase (365 aa).

Arg-42 contributes to the L-glutamate binding site. Pyridoxal 5'-phosphate contacts are provided by residues 76–77 (GR), Trp-102, Thr-156, Asp-175, and Gln-198. Lys-199 carries the N6-(pyridoxal phosphate)lysine modification. Position 240–241 (240–241 (NT)) interacts with pyridoxal 5'-phosphate.

The protein belongs to the class-V pyridoxal-phosphate-dependent aminotransferase family. SerC subfamily. In terms of assembly, homodimer. Requires pyridoxal 5'-phosphate as cofactor.

The protein localises to the cytoplasm. The catalysed reaction is O-phospho-L-serine + 2-oxoglutarate = 3-phosphooxypyruvate + L-glutamate. The enzyme catalyses 4-(phosphooxy)-L-threonine + 2-oxoglutarate = (R)-3-hydroxy-2-oxo-4-phosphooxybutanoate + L-glutamate. It functions in the pathway amino-acid biosynthesis; L-serine biosynthesis; L-serine from 3-phospho-D-glycerate: step 2/3. The protein operates within cofactor biosynthesis; pyridoxine 5'-phosphate biosynthesis; pyridoxine 5'-phosphate from D-erythrose 4-phosphate: step 3/5. Its function is as follows. Catalyzes the reversible conversion of 3-phosphohydroxypyruvate to phosphoserine and of 3-hydroxy-2-oxo-4-phosphonooxybutanoate to phosphohydroxythreonine. This is Phosphoserine aminotransferase from Shewanella oneidensis (strain ATCC 700550 / JCM 31522 / CIP 106686 / LMG 19005 / NCIMB 14063 / MR-1).